Reading from the N-terminus, the 155-residue chain is FHA domain-containing protein FhaB (155 aa).

The helical transmembrane segment at 6–28 threads the bilayer; sequence LQLTRAGFLMLLWVFIWSVLRIL. T36 carries the phosphothreonine modification. An FHA domain is found at 83–132; that stretch reads VLIGRADDSTLVLTDDYASTRHARLSMRGSEWYVEDLGSTNGTYLDRAKV.

In terms of processing, phosphorylated by PknB. Dephosphorylated by PstP.

It localises to the cell membrane. In Mycobacterium tuberculosis (strain CDC 1551 / Oshkosh), this protein is FHA domain-containing protein FhaB (fhaB).